The chain runs to 122 residues: Large ribosomal subunit protein uL14c (122 aa).

Belongs to the universal ribosomal protein uL14 family. Part of the 50S ribosomal subunit.

The protein localises to the plastid. The protein resides in the chloroplast. Functionally, binds to 23S rRNA. The protein is Large ribosomal subunit protein uL14c of Acorus calamus (Sweet flag).